A 125-amino-acid polypeptide reads, in one-letter code: uncharacterized protein (125 aa).

This is an uncharacterized protein from Microplitis demolitor (Parasitoid wasp).